Here is a 345-residue protein sequence, read N- to C-terminus: Dense granule protein 4 (345 aa).

Positions 1–20 (MQGTWFSLFVVVMVSHLACG) are cleaved as a signal peptide. The segment covering 227 to 251 (SVSVSTEDSGLTGVKDSSSSESTVT) has biased composition (polar residues). Residues 227–271 (SVSVSTEDSGLTGVKDSSSSESTVTPADEAASESEEGDKTSRKSK) form a disordered region. The helical transmembrane segment at 276–296 (ILTGLGVAATLAAAAAAAKAV) threads the bilayer. A disordered region spans residues 298 to 345 (GFGGTRTSTAPAEAGKTELDDGYRPPPFNPRPSPYAELLKDLERMRKE). Residues 321 to 330 (RPPPFNPRPS) are compositionally biased toward pro residues. Basic and acidic residues predominate over residues 335-345 (LLKDLERMRKE).

Post-translationally, O-glycosylated.

Its subcellular location is the secreted. The protein resides in the parasitophorous vacuole lumen. The protein localises to the parasitophorous vacuole membrane. It is found in the cytoplasmic vesicle. It localises to the secretory vesicle. In terms of biological role, major granular component involved in excreted-secreted antigen (ESA) immunity. The chain is Dense granule protein 4 (GRA4) from Toxoplasma gondii.